The chain runs to 447 residues: Glutamate--tRNA ligase 1 (447 aa).

Positions 10–20 (PSPTGMLHVGN) match the 'HIGH' region motif. Residues 240-244 (KISKR) carry the 'KMSKS' region motif. ATP is bound at residue K243.

Belongs to the class-I aminoacyl-tRNA synthetase family. Glutamate--tRNA ligase type 1 subfamily. Monomer.

The protein localises to the cytoplasm. It catalyses the reaction tRNA(Glu) + L-glutamate + ATP = L-glutamyl-tRNA(Glu) + AMP + diphosphate. In terms of biological role, catalyzes the attachment of glutamate to tRNA(Glu) in a two-step reaction: glutamate is first activated by ATP to form Glu-AMP and then transferred to the acceptor end of tRNA(Glu). In Rickettsia conorii (strain ATCC VR-613 / Malish 7), this protein is Glutamate--tRNA ligase 1.